The chain runs to 425 residues: Serine--tRNA ligase (425 aa).

233–235 (TAE) serves as a coordination point for L-serine. Position 264–266 (264–266 (RAE)) interacts with ATP. Glutamate 287 contributes to the L-serine binding site. Residue 351 to 354 (EISS) coordinates ATP. Residue serine 387 coordinates L-serine.

Belongs to the class-II aminoacyl-tRNA synthetase family. Type-1 seryl-tRNA synthetase subfamily. Homodimer. The tRNA molecule binds across the dimer.

The protein resides in the cytoplasm. It carries out the reaction tRNA(Ser) + L-serine + ATP = L-seryl-tRNA(Ser) + AMP + diphosphate + H(+). The catalysed reaction is tRNA(Sec) + L-serine + ATP = L-seryl-tRNA(Sec) + AMP + diphosphate + H(+). It functions in the pathway aminoacyl-tRNA biosynthesis; selenocysteinyl-tRNA(Sec) biosynthesis; L-seryl-tRNA(Sec) from L-serine and tRNA(Sec): step 1/1. Catalyzes the attachment of serine to tRNA(Ser). Is also able to aminoacylate tRNA(Sec) with serine, to form the misacylated tRNA L-seryl-tRNA(Sec), which will be further converted into selenocysteinyl-tRNA(Sec). This Clostridium botulinum (strain Alaska E43 / Type E3) protein is Serine--tRNA ligase.